We begin with the raw amino-acid sequence, 99 residues long: Co-chaperonin GroES (99 aa).

Belongs to the GroES chaperonin family. Heptamer of 7 subunits arranged in a ring. Interacts with the chaperonin GroEL.

It localises to the cytoplasm. Together with the chaperonin GroEL, plays an essential role in assisting protein folding. The GroEL-GroES system forms a nano-cage that allows encapsulation of the non-native substrate proteins and provides a physical environment optimized to promote and accelerate protein folding. GroES binds to the apical surface of the GroEL ring, thereby capping the opening of the GroEL channel. This is Co-chaperonin GroES from Corynebacterium jeikeium (strain K411).